Here is a 393-residue protein sequence, read N- to C-terminus: Formate-dependent phosphoribosylglycinamide formyltransferase (393 aa).

Residues 22-23 (EL) and Glu-82 contribute to the N(1)-(5-phospho-beta-D-ribosyl)glycinamide site. ATP contacts are provided by residues Arg-114, Lys-155, 160–165 (SSGKGQ), 195–198 (EGFI), and Glu-203. The ATP-grasp domain occupies 119 to 308 (RLAAEELDLP…QFALHARAIL (190 aa)). Residues Glu-267 and Glu-279 each contribute to the Mg(2+) site. N(1)-(5-phospho-beta-D-ribosyl)glycinamide contacts are provided by residues Asp-286, Lys-356, and 363 to 364 (RR).

The protein belongs to the PurK/PurT family. In terms of assembly, homodimer.

It carries out the reaction N(1)-(5-phospho-beta-D-ribosyl)glycinamide + formate + ATP = N(2)-formyl-N(1)-(5-phospho-beta-D-ribosyl)glycinamide + ADP + phosphate + H(+). The protein operates within purine metabolism; IMP biosynthesis via de novo pathway; N(2)-formyl-N(1)-(5-phospho-D-ribosyl)glycinamide from N(1)-(5-phospho-D-ribosyl)glycinamide (formate route): step 1/1. In terms of biological role, involved in the de novo purine biosynthesis. Catalyzes the transfer of formate to 5-phospho-ribosyl-glycinamide (GAR), producing 5-phospho-ribosyl-N-formylglycinamide (FGAR). Formate is provided by PurU via hydrolysis of 10-formyl-tetrahydrofolate. This Pseudomonas putida (strain ATCC 47054 / DSM 6125 / CFBP 8728 / NCIMB 11950 / KT2440) protein is Formate-dependent phosphoribosylglycinamide formyltransferase.